The primary structure comprises 248 residues: Ubiquinone/menaquinone biosynthesis C-methyltransferase UbiE (248 aa).

Ser-68 and Asp-92 together coordinate S-adenosyl-L-methionine.

This sequence belongs to the class I-like SAM-binding methyltransferase superfamily. MenG/UbiE family.

It carries out the reaction a 2-demethylmenaquinol + S-adenosyl-L-methionine = a menaquinol + S-adenosyl-L-homocysteine + H(+). The enzyme catalyses a 2-methoxy-6-(all-trans-polyprenyl)benzene-1,4-diol + S-adenosyl-L-methionine = a 5-methoxy-2-methyl-3-(all-trans-polyprenyl)benzene-1,4-diol + S-adenosyl-L-homocysteine + H(+). It functions in the pathway quinol/quinone metabolism; menaquinone biosynthesis; menaquinol from 1,4-dihydroxy-2-naphthoate: step 2/2. Its pathway is cofactor biosynthesis; ubiquinone biosynthesis. Functionally, methyltransferase required for the conversion of demethylmenaquinol (DMKH2) to menaquinol (MKH2) and the conversion of 2-polyprenyl-6-methoxy-1,4-benzoquinol (DDMQH2) to 2-polyprenyl-3-methyl-6-methoxy-1,4-benzoquinol (DMQH2). The sequence is that of Ubiquinone/menaquinone biosynthesis C-methyltransferase UbiE from Rickettsia bellii (strain OSU 85-389).